Consider the following 384-residue polypeptide: 8-amino-7-oxononanoate synthase (384 aa).

Arginine 21 serves as a coordination point for substrate. 108–109 (GF) provides a ligand contact to pyridoxal 5'-phosphate. Residue histidine 133 participates in substrate binding. Pyridoxal 5'-phosphate is bound by residues serine 179, histidine 207, and threonine 233. Residue lysine 236 is modified to N6-(pyridoxal phosphate)lysine. Threonine 352 lines the substrate pocket.

The protein belongs to the class-II pyridoxal-phosphate-dependent aminotransferase family. BioF subfamily. In terms of assembly, homodimer. It depends on pyridoxal 5'-phosphate as a cofactor.

It catalyses the reaction 6-carboxyhexanoyl-[ACP] + L-alanine + H(+) = (8S)-8-amino-7-oxononanoate + holo-[ACP] + CO2. Its pathway is cofactor biosynthesis; biotin biosynthesis. Catalyzes the decarboxylative condensation of pimeloyl-[acyl-carrier protein] and L-alanine to produce 8-amino-7-oxononanoate (AON), [acyl-carrier protein], and carbon dioxide. This Escherichia coli (strain SE11) protein is 8-amino-7-oxononanoate synthase.